A 122-amino-acid polypeptide reads, in one-letter code: Large ribosomal subunit protein uL14 (122 aa).

It belongs to the universal ribosomal protein uL14 family. Part of the 50S ribosomal subunit. Forms a cluster with proteins L3 and L19. In the 70S ribosome, L14 and L19 interact and together make contacts with the 16S rRNA in bridges B5 and B8.

Its function is as follows. Binds to 23S rRNA. Forms part of two intersubunit bridges in the 70S ribosome. This chain is Large ribosomal subunit protein uL14, found in Macrococcus caseolyticus (strain JCSC5402) (Macrococcoides caseolyticum).